The following is a 286-amino-acid chain: Aldo-keto reductase MAP_4149 (286 aa).

The active-site Proton donor is the Tyr61. Residues Leu201, Val203, Val239, Arg241, Ser242, Arg247, and Asn251 each coordinate NADPH.

Belongs to the aldo/keto reductase family.

This is Aldo-keto reductase MAP_4149 from Mycolicibacterium paratuberculosis (strain ATCC BAA-968 / K-10) (Mycobacterium paratuberculosis).